The chain runs to 345 residues: Protein sdf-9 (345 aa).

The Tyrosine-protein phosphatase domain occupies 33–284 (NRNRVVKIVP…SFIYEAVLDY (252 aa)).

The protein belongs to the protein-tyrosine phosphatase family. As to expression, expressed in the 2 embryonic head hypodermal cells XXXL/R.

The protein localises to the cytoplasm. The protein resides in the cell membrane. In terms of biological role, together with eak-4 and phosphatase eak-6, negatively regulates dauer larva formation downstream of insulin-like receptor daf-2 and in parallel of age-1, pdk-1 and akt-1. This chain is Protein sdf-9, found in Caenorhabditis elegans.